A 275-amino-acid polypeptide reads, in one-letter code: NH(3)-dependent NAD(+) synthetase (275 aa).

47–54 provides a ligand contact to ATP; the sequence is GISGGQDS. Asp53 contributes to the Mg(2+) binding site. Arg141 is a binding site for deamido-NAD(+). Thr161 is an ATP binding site. A Mg(2+)-binding site is contributed by Glu166. Positions 174 and 181 each coordinate deamido-NAD(+). ATP contacts are provided by Lys190 and Thr212. 261–262 serves as a coordination point for deamido-NAD(+); it reads HK.

This sequence belongs to the NAD synthetase family. Homodimer.

The enzyme catalyses deamido-NAD(+) + NH4(+) + ATP = AMP + diphosphate + NAD(+) + H(+). The protein operates within cofactor biosynthesis; NAD(+) biosynthesis; NAD(+) from deamido-NAD(+) (ammonia route): step 1/1. Functionally, catalyzes the ATP-dependent amidation of deamido-NAD to form NAD. Uses ammonia as a nitrogen source. The sequence is that of NH(3)-dependent NAD(+) synthetase from Latilactobacillus sakei subsp. sakei (strain 23K) (Lactobacillus sakei subsp. sakei).